Here is a 130-residue protein sequence, read N- to C-terminus: Small ribosomal subunit protein uS8 (130 aa).

The protein belongs to the universal ribosomal protein uS8 family. In terms of assembly, part of the 30S ribosomal subunit.

In terms of biological role, one of the primary rRNA binding proteins, it binds directly to 16S rRNA central domain where it helps coordinate assembly of the platform of the 30S subunit. This is Small ribosomal subunit protein uS8 (rps8) from Methanocaldococcus jannaschii (strain ATCC 43067 / DSM 2661 / JAL-1 / JCM 10045 / NBRC 100440) (Methanococcus jannaschii).